We begin with the raw amino-acid sequence, 92 residues long: Small ribosomal subunit protein uS19 (92 aa).

The protein belongs to the universal ribosomal protein uS19 family.

Functionally, protein S19 forms a complex with S13 that binds strongly to the 16S ribosomal RNA. This chain is Small ribosomal subunit protein uS19, found in Thermosynechococcus vestitus (strain NIES-2133 / IAM M-273 / BP-1).